The chain runs to 156 residues: Phytohormone-binding protein (156 aa).

Residues Gln22, Gln68, and Thr141 each contribute to the gibberellin A3 site.

This sequence belongs to the BetVI family.

Binds gibberellin A3 (GA3) in vitro. In Medicago truncatula (Barrel medic), this protein is Phytohormone-binding protein.